We begin with the raw amino-acid sequence, 259 residues long: Thiazole synthase (259 aa).

The Schiff-base intermediate with DXP role is filled by lysine 95. 1-deoxy-D-xylulose 5-phosphate contacts are provided by residues glycine 156, 182–183 (AG), and 204–205 (NT).

This sequence belongs to the ThiG family. As to quaternary structure, homotetramer. Forms heterodimers with either ThiH or ThiS.

The protein resides in the cytoplasm. The enzyme catalyses [ThiS sulfur-carrier protein]-C-terminal-Gly-aminoethanethioate + 2-iminoacetate + 1-deoxy-D-xylulose 5-phosphate = [ThiS sulfur-carrier protein]-C-terminal Gly-Gly + 2-[(2R,5Z)-2-carboxy-4-methylthiazol-5(2H)-ylidene]ethyl phosphate + 2 H2O + H(+). It participates in cofactor biosynthesis; thiamine diphosphate biosynthesis. Its function is as follows. Catalyzes the rearrangement of 1-deoxy-D-xylulose 5-phosphate (DXP) to produce the thiazole phosphate moiety of thiamine. Sulfur is provided by the thiocarboxylate moiety of the carrier protein ThiS. In vitro, sulfur can be provided by H(2)S. In Baumannia cicadellinicola subsp. Homalodisca coagulata, this protein is Thiazole synthase.